The primary structure comprises 205 residues: Large ribosomal subunit protein bL9 (205 aa).

The tract at residues 160-205 (RDRKSRNAAAASEVQDAPVEDGGDEVVSVDSVAAEDGGADASGGTA) is disordered. A compositionally biased stretch (low complexity) spans 184-195 (EVVSVDSVAAED).

The protein belongs to the bacterial ribosomal protein bL9 family.

In terms of biological role, binds to the 23S rRNA. The chain is Large ribosomal subunit protein bL9 from Anaplasma phagocytophilum (strain HZ).